Reading from the N-terminus, the 130-residue chain is Ribosome-binding factor A (130 aa).

It belongs to the RbfA family. Monomer. Binds 30S ribosomal subunits, but not 50S ribosomal subunits or 70S ribosomes.

The protein resides in the cytoplasm. One of several proteins that assist in the late maturation steps of the functional core of the 30S ribosomal subunit. Associates with free 30S ribosomal subunits (but not with 30S subunits that are part of 70S ribosomes or polysomes). Required for efficient processing of 16S rRNA. May interact with the 5'-terminal helix region of 16S rRNA. This is Ribosome-binding factor A from Flavobacterium johnsoniae (strain ATCC 17061 / DSM 2064 / JCM 8514 / BCRC 14874 / CCUG 350202 / NBRC 14942 / NCIMB 11054 / UW101) (Cytophaga johnsonae).